The chain runs to 670 residues: FAD-binding monooxygenase ausC (670 aa).

FAD is bound by residues 144–147 (TWYW), 156–157 (DT), and Tyr-162. 154–156 (MCD) contacts NADP(+). NADP(+) contacts are provided by residues 299–305 (TGASAVQ) and 322–323 (RT).

Belongs to the FAD-binding monooxygenase family. Requires FAD as cofactor.

The catalysed reaction is preaustinoid A + AH2 + O2 = preaustinoid A1 + A + H2O. It functions in the pathway secondary metabolite biosynthesis; terpenoid biosynthesis. Its function is as follows. FAD-binding monooxygenase; part of the gene cluster that mediates the biosynthesis of calidodehydroaustin, a fungal meroterpenoid. The first step of the pathway is the synthesis of 3,5-dimethylorsellinic acid by the polyketide synthase ausA. 3,5-dimethylorsellinic acid is then prenylated by the polyprenyl transferase ausN. Further epoxidation by the FAD-dependent monooxygenase ausM and cyclization by the probable terpene cyclase ausL lead to the formation of protoaustinoid A. Protoaustinoid A is then oxidized to spiro-lactone preaustinoid A3 by the combined action of the FAD-binding monooxygenases ausB and ausC, and the dioxygenase ausE. Acid-catalyzed keto-rearrangement and ring contraction of the tetraketide portion of preaustinoid A3 by ausJ lead to the formation of preaustinoid A4. The aldo-keto reductase ausK, with the help of ausH, is involved in the next step by transforming preaustinoid A4 into isoaustinone which is in turn hydroxylated by the P450 monooxygenase ausI to form austinolide. The cytochrome P450 monooxygenase ausG modifies austinolide to austinol. Austinol is further acetylated to austin by the O-acetyltransferase ausP, which spontaneously changes to dehydroaustin. The cytochrome P450 monooxygenase ausR then converts dehydroaustin is into 7-dehydrodehydroaustin. The hydroxylation catalyzed by ausR permits the O-acetyltransferase ausQ to add an additional acetyl group to the molecule, leading to the formation of acetoxydehydroaustin. The short chain dehydrogenase ausT catalyzes the reduction of the double bond present between carbon atoms 1 and 2 to convert 7-dehydrodehydroaustin into 1,2-dihydro-7-hydroxydehydroaustin. AusQ catalyzes not only an acetylation reaction but also the addition of the PKS ausV diketide product to 1,2-dihydro-7-hydroxydehydroaustin, forming precalidodehydroaustin. Finally, the iron/alpha-ketoglutarate-dependent dioxygenase converts precalidodehydroaustin into calidodehydroaustin. The sequence is that of FAD-binding monooxygenase ausC from Aspergillus calidoustus.